A 248-amino-acid polypeptide reads, in one-letter code: Ribonuclease PH (248 aa).

Phosphate-binding positions include R86 and 124 to 126; that span reads GTR.

It belongs to the RNase PH family. As to quaternary structure, homohexameric ring arranged as a trimer of dimers.

It carries out the reaction tRNA(n+1) + phosphate = tRNA(n) + a ribonucleoside 5'-diphosphate. Its function is as follows. Phosphorolytic 3'-5' exoribonuclease that plays an important role in tRNA 3'-end maturation. Removes nucleotide residues following the 3'-CCA terminus of tRNAs; can also add nucleotides to the ends of RNA molecules by using nucleoside diphosphates as substrates, but this may not be physiologically important. Probably plays a role in initiation of 16S rRNA degradation (leading to ribosome degradation) during starvation. The chain is Ribonuclease PH from Listeria welshimeri serovar 6b (strain ATCC 35897 / DSM 20650 / CCUG 15529 / CIP 8149 / NCTC 11857 / SLCC 5334 / V8).